A 139-amino-acid chain; its full sequence is Nucleoside diphosphate kinase (139 aa).

Positions 9, 57, 85, 91, 102, and 112 each coordinate ATP. Histidine 115 serves as the catalytic Pros-phosphohistidine intermediate.

Belongs to the NDK family. Homotetramer. Mg(2+) serves as cofactor.

It is found in the cytoplasm. The enzyme catalyses a 2'-deoxyribonucleoside 5'-diphosphate + ATP = a 2'-deoxyribonucleoside 5'-triphosphate + ADP. The catalysed reaction is a ribonucleoside 5'-diphosphate + ATP = a ribonucleoside 5'-triphosphate + ADP. In terms of biological role, major role in the synthesis of nucleoside triphosphates other than ATP. The ATP gamma phosphate is transferred to the NDP beta phosphate via a ping-pong mechanism, using a phosphorylated active-site intermediate. The chain is Nucleoside diphosphate kinase from Desulfosudis oleivorans (strain DSM 6200 / JCM 39069 / Hxd3) (Desulfococcus oleovorans).